Here is a 521-residue protein sequence, read N- to C-terminus: 2,3-bisphosphoglycerate-independent phosphoglycerate mutase 2 (521 aa).

Positions 20 and 70 each coordinate Mn(2+). Ser70 serves as the catalytic Phosphoserine intermediate. Residues His131, 161–162 (RD), Arg193, Arg199, 270–273 (RPDR), and Lys343 each bind substrate. Residues Asp410, His414, Asp451, His452, and His470 each contribute to the Mn(2+) site.

It belongs to the BPG-independent phosphoglycerate mutase family. Requires Mn(2+) as cofactor.

The enzyme catalyses (2R)-2-phosphoglycerate = (2R)-3-phosphoglycerate. It participates in carbohydrate degradation; glycolysis; pyruvate from D-glyceraldehyde 3-phosphate: step 3/5. In terms of biological role, catalyzes the interconversion of 2-phosphoglycerate and 3-phosphoglycerate. In Methanosarcina acetivorans (strain ATCC 35395 / DSM 2834 / JCM 12185 / C2A), this protein is 2,3-bisphosphoglycerate-independent phosphoglycerate mutase 2.